Consider the following 147-residue polypeptide: Lectin-like protein BA14k (147 aa).

The N-terminal stretch at 1-26 (MNSFRKTCAGALALIFGATSIVPTVA) is a signal peptide. A helical membrane pass occupies residues 80–100 (GWWYPLAAFGAGAIIGGAISQ).

It belongs to the BA14k family.

Its subcellular location is the cell membrane. Its function is as follows. Has immunoglobulin-binding and hemagglutination properties, and can bind to mannose. Essential for virulence. May be involved in LPS biosynthesis or polysaccharide transport. The chain is Lectin-like protein BA14k from Brucella abortus (strain S19).